The sequence spans 133 residues: Methylglyoxal synthase (133 aa).

In terms of domain architecture, MGS-like spans 1 to 133; that stretch reads MPPKPRIALI…ARENGAAQAG (133 aa). Substrate-binding positions include His12, Lys16, 38–41, and 58–59; these read TGTT and SG. The active-site Proton donor/acceptor is the Asp64. His91 contacts substrate.

This sequence belongs to the methylglyoxal synthase family.

The catalysed reaction is dihydroxyacetone phosphate = methylglyoxal + phosphate. In terms of biological role, catalyzes the formation of methylglyoxal from dihydroxyacetone phosphate. This is Methylglyoxal synthase from Cupriavidus taiwanensis (strain DSM 17343 / BCRC 17206 / CCUG 44338 / CIP 107171 / LMG 19424 / R1) (Ralstonia taiwanensis (strain LMG 19424)).